Consider the following 351-residue polypeptide: Mediator of RNA polymerase II transcription subunit 18 (351 aa).

The segment at 153–231 (GNGDPIDIDT…LPQSLSNGVS (79 aa)) is disordered. Basic and acidic residues predominate over residues 163 to 204 (NNDKQGDNNTDKPKQEHDGKLPEAIDEDIIKNGDEKKTTHDD). Positions 205 to 216 (NDSDIMEIDEPN) are enriched in acidic residues. Positions 217–231 (PETQTLPQSLSNGVS) are enriched in polar residues.

Belongs to the Mediator complex subunit 18 family. In terms of assembly, component of the Mediator complex.

It is found in the nucleus. In terms of biological role, component of the Mediator complex, a coactivator involved in the regulated transcription of nearly all RNA polymerase II-dependent genes. Mediator functions as a bridge to convey information from gene-specific regulatory proteins to the basal RNA polymerase II transcription machinery. Mediator is recruited to promoters by direct interactions with regulatory proteins and serves as a scaffold for the assembly of a functional preinitiation complex with RNA polymerase II and the general transcription factors. The sequence is that of Mediator of RNA polymerase II transcription subunit 18 (SRB5) from Candida albicans (strain SC5314 / ATCC MYA-2876) (Yeast).